The chain runs to 1178 residues: MSPNSSKTRTDQISSMPGINEATKVESKNVVKDAVPIKSEVETNGTSIVREKQDPSYVGWKQVGGWEEKDELTSEDLLVDVNKDTFLGNLLPDKFYGDWYHEVAILIIAGLCSFVLGYFKFSLASVLIVMLTTGMLYRTSSKKYRESLRDLAQKEQTVEKITSDYESVEWLNTFLDKYWPIIEPSVSQQIVDGTNTALSENVAIPKFIKAIWLDQFTLGVKPPRIDAIKTFQNTKSDVVVMDVCLSFTPHDMSDLDAKQCRNYVNSNVVLKAKIFGMDIPVSVADIFFQVFVRFRFQLMTTLPLVETINIQLLEVPEVDFISRLLGNSVFNWEILAIPGLMRLIQKMAFKYLSPVLLPPFSLQLNIPQLLSKTGLPIGVLEIKVKNAHGLRKLVGMIKKTVDPYLTFELSGKIVGKTKVFKNSANPVWNESIYILLQSFTDPLTIAVYDKRETLSDKKMGTVIFNLNKLHANHYHKNEKVHFLRNSKPVGELTFDLRFFPTIEPKKLLNGDEEPLPDMNTGITKITIRELKGLDELSDKKFVFAELYVNAELVMTTKKEKRTAHLKWNSDYYSVVTDRRKTICRFVLKDQSGKVISSSVQPLNHLIDRTEVNKEWIPLRNGKGELKVTTYWRPVDIDLGLKSVGYTTPIGMLRVFINKAENLRNPDSLGKISPYAKVSVNGVARGRTNERIETLNPIWNQSIYVSVTSPLQKVSIDCFGIDTNGDDHNLGSLNIQTQNIYHKDNDDKYTIFIDNAPRTGNLIGKKGVKGTVTYYLSFYPVVPVLSLEEAKEVDEINEKKDKLEKQKSTLDDKNISKEEKERIKKEEFRLTEKYDMYSYKMKLDLDELLQYNAGVLGVTVLGGELPQPGLYVQTFFDSCGYAAITSAKNAIRTIKTGWSGDFMIKELEWSVTTFRVTKTKDANKAENFICEVNIPTIELVRNCYYKPSVLNLIGKKSAKLLVQVSWFPVTATELPQSDLITNSGDLKITAKSAENLIGVNKNGYSDPYVEFFLNEKSTSPFFKTAVQKKTLNPTWNESKTIEVSNRVNDYLTINVKDYESTNSNRSIGKAVVPLSTIDPESDTTFNIPLVGPKGEDGGVLHLEFEFEPRYTTNVVKREAGLGNFATKGLGTGIKAGSTVFALGTNVVSTGLGTIDKVKAGVFGGKKSTTTGDKKSEEKQ.

Over residues 1 to 17 (MSPNSSKTRTDQISSMP) the composition is skewed to polar residues. The disordered stretch occupies residues 1–27 (MSPNSSKTRTDQISSMPGINEATKVES). Residues 1–98 (MSPNSSKTRT…NLLPDKFYGD (98 aa)) lie on the Cytoplasmic side of the membrane. The chain crosses the membrane as a helical span at residues 99-119 (WYHEVAILIIAGLCSFVLGYF). A topological domain (extracellular) is located at residue K120. Residues 121–141 (FSLASVLIVMLTTGMLYRTSS) traverse the membrane as a helical segment. Topologically, residues 142-1178 (KKYRESLRDL…TGDKKSEEKQ (1037 aa)) are cytoplasmic. One can recognise an SMP-LTD domain in the interval 164–367 (DYESVEWLNT…PPFSLQLNIP (204 aa)). C2 domains are found at residues 358–481 (PPFS…EKVH), 504–628 (PKKL…LKVT), and 632–749 (RPVD…DKYT). The stretch at 784-821 (LSLEEAKEVDEINEKKDKLEKQKSTLDDKNISKEEKER) forms a coiled coil. The C2 4 domain maps to 962 to 1086 (QVSWFPVTAT…DPESDTTFNI (125 aa)). Phosphoserine is present on S991.

The protein belongs to the tricalbin family. As to quaternary structure, interacts with TCB1 and TCB3 via its C-terminal domain.

It localises to the cell membrane. The protein localises to the endoplasmic reticulum membrane. May play a role in membrane trafficking. This Saccharomyces cerevisiae (strain ATCC 204508 / S288c) (Baker's yeast) protein is Tricalbin-2 (TCB2).